Consider the following 557-residue polypeptide: T-complex protein 1 subunit theta-like 2 (557 aa).

2 disordered regions span residues 1–33 (MDST…EPHL) and 531–557 (EIWN…GLNN).

The protein belongs to the TCP-1 chaperonin family.

The protein localises to the cytoplasm. In terms of biological role, possible molecular chaperone; assists the folding of proteins upon ATP hydrolysis. The polypeptide is T-complex protein 1 subunit theta-like 2 (CCT8L2) (Homo sapiens (Human)).